Reading from the N-terminus, the 165-residue chain is Transcription factor TCP16 (165 aa).

Polar residues predominate over residues 1–11 (MDSKNGINNSQ). Disordered regions lie at residues 1–21 (MDSK…KDRH) and 146–165 (GNAT…TTTV). Residues 12–21 (KARRTPKDRH) show a composition bias toward basic residues. The 55-residue stretch at 17 to 71 (PKDRHLKIGGRDRRIRIPPSVAPQLFRLTKELGFKTDGETVSWLLQNAEPAIFAA) folds into the TCP domain. The span at 148-165 (ATASDTTSAATTTATTTV) shows a compositional bias: low complexity.

In terms of tissue distribution, mostly in anther in young buds.

Its subcellular location is the nucleus. Functionally, required during early processes in pollen development. The sequence is that of Transcription factor TCP16 (TCP16) from Arabidopsis thaliana (Mouse-ear cress).